A 475-amino-acid chain; its full sequence is Exodeoxyribonuclease I (475 aa).

The Exonuclease domain maps to 13–192 (FHDYETFGTH…AMADVYATIA (180 aa)). Residues D15 and E17 each contribute to the Mg(2+) site. Substrate is bound by residues E17 and R165. D186 provides a ligand contact to Mg(2+). Residues 202–355 (PRLFDYLFTH…KVVAIFAEAE (154 aa)) enclose the ExoI SH3-like domain. The ExoI C-terminal domain occupies 358 to 475 (TPSDNVDAQL…ALWQYAEEIV (118 aa)).

Monomer. Interacts with ssb (via C-terminus); this interaction stimulates the exonuclease activity by recruiting the enzyme to its substrate. The cofactor is Mg(2+).

It catalyses the reaction Exonucleolytic cleavage in the 3'- to 5'-direction to yield nucleoside 5'-phosphates.. Inhibited by 10 mM EDTA. Its function is as follows. Degrades single-stranded DNA (ssDNA) in a highly processive manner. Also functions as a DNA deoxyribophosphodiesterase that releases deoxyribose-phosphate moieties following the cleavage of DNA at an apurinic/apyrimidinic (AP) site by either an AP endonuclease or AP lyase. In Escherichia coli (strain K12), this protein is Exodeoxyribonuclease I (sbcB).